Consider the following 562-residue polypeptide: Wee1-like protein kinase 2 (562 aa).

2 disordered regions span residues 1–86 and 161–181; these read MRTA…DKGV and YRQA…DDCS. A compositionally biased stretch (polar residues) spans 35–48; the sequence is HSNQRGSPVNSWRA. The 275-residue stretch at 217–491 folds into the Protein kinase domain; sequence FLEIEKIGAG…AKNSLLRRCV (275 aa). ATP-binding positions include 223–231 and Lys-246; that span reads IGAGEFGSV. Residue Asp-344 is the Proton acceptor of the active site. 2 residues coordinate Mg(2+): Asn-349 and Asp-381. A coiled-coil region spans residues 494 to 520; that stretch reads AAQLQKQLNVEKFKTAMLERELKAAKL.

Belongs to the protein kinase superfamily. Ser/Thr protein kinase family. WEE1 subfamily.

It localises to the nucleus. It carries out the reaction L-tyrosyl-[protein] + ATP = O-phospho-L-tyrosyl-[protein] + ADP + H(+). Its function is as follows. Oocyte-specific protein tyrosine kinase that phosphorylates and inhibits cdk1 and acts as a regulator of meiosis. Required to maintain meiotic arrest in oocytes by phosphorylating cdk1 at 'Tyr-15', leading to inhibit cdk1 activity and prevent meiotic reentry. In Xenopus tropicalis (Western clawed frog), this protein is Wee1-like protein kinase 2 (wee2).